A 398-amino-acid chain; its full sequence is Probable sugar efflux transporter (398 aa).

Transmembrane regions (helical) follow at residues 15–35, 50–70, 81–101, 103–123, 136–156, 169–189, 209–229, 246–266, 275–295, 301–321, 333–353, and 364–384; these read VVTL…PVGL, VGIM…PFML, LIGL…AWNF, VLVI…SITA, AQAL…GLPI, TFFA…KLLP, PALM…YTAY, FATV…VLFG, LLVS…MPAA, LAIL…GMQV, VAMS…ALVG, and AIGY…ILIF.

This sequence belongs to the major facilitator superfamily. SotB (TC 2.A.1.2) family.

The protein resides in the cell inner membrane. In terms of biological role, involved in the efflux of sugars. The physiological role may be the reduction of the intracellular concentration of toxic sugars or sugar metabolites. In Enterobacter sp. (strain 638), this protein is Probable sugar efflux transporter.